The sequence spans 420 residues: Tyrosine--tRNA ligase (420 aa).

Tyr36 serves as a coordination point for L-tyrosine. The 'HIGH' region motif lies at 41–50 (PTADSLHIGH). Residues Tyr170 and Gln174 each contribute to the L-tyrosine site. The short motif at 231 to 235 (KFGKS) is the 'KMSKS' region element. Lys234 is a binding site for ATP. Positions 353–420 (TNIVEVLIET…KKKYFMVNYQ (68 aa)) constitute an S4 RNA-binding domain.

This sequence belongs to the class-I aminoacyl-tRNA synthetase family. TyrS type 1 subfamily. Homodimer.

The protein resides in the cytoplasm. The enzyme catalyses tRNA(Tyr) + L-tyrosine + ATP = L-tyrosyl-tRNA(Tyr) + AMP + diphosphate + H(+). Catalyzes the attachment of tyrosine to tRNA(Tyr) in a two-step reaction: tyrosine is first activated by ATP to form Tyr-AMP and then transferred to the acceptor end of tRNA(Tyr). This Staphylococcus aureus (strain COL) protein is Tyrosine--tRNA ligase.